The following is an 80-amino-acid chain: Large ribosomal subunit protein bL28 (80 aa).

A disordered region spans residues 1 to 23; that stretch reads MARVCQITGKKTRTGNNVSHANN.

Belongs to the bacterial ribosomal protein bL28 family.

This is Large ribosomal subunit protein bL28 from Cytophaga hutchinsonii (strain ATCC 33406 / DSM 1761 / CIP 103989 / NBRC 15051 / NCIMB 9469 / D465).